The sequence spans 322 residues: Ferredoxin--NADP reductase (322 aa).

FAD contacts are provided by aspartate 33, glutamine 41, tyrosine 46, alanine 86, phenylalanine 120, aspartate 278, and serine 319.

It belongs to the ferredoxin--NADP reductase type 2 family. Homodimer. FAD is required as a cofactor.

The enzyme catalyses 2 reduced [2Fe-2S]-[ferredoxin] + NADP(+) + H(+) = 2 oxidized [2Fe-2S]-[ferredoxin] + NADPH. This chain is Ferredoxin--NADP reductase, found in Salinispora tropica (strain ATCC BAA-916 / DSM 44818 / JCM 13857 / NBRC 105044 / CNB-440).